The chain runs to 931 residues: ORF4 polyprotein (931 aa).

Post-translationally, proteolytic processing of ORF4 polyprotein yields the VP4a, VP4b and VP4c capsid proteins.

It is found in the virion. Its function is as follows. ORF4 polyprotein codes for VP4a, VP4b, and VP4c, three of the four proteins that self-assemble to form the icosahedral capsid. The capsid is made of VP3 (coded by ORF3), VP4a, VP4b and VP4c. The sequence is that of ORF4 polyprotein from Drosophila melanogaster (Fruit fly).